A 370-amino-acid polypeptide reads, in one-letter code: Galanin receptor type 3 (370 aa).

At 1-20 (MADIQNISLDSPGSVGAVAV) the chain is on the extracellular side. Residue Asn6 is glycosylated (N-linked (GlcNAc...) asparagine). The helical transmembrane segment at 21-41 (PVVFALIFLLGMVGNGLVLAV) threads the bilayer. Over 42–57 (LLQPGPSAWQEPGSTT) the chain is Cytoplasmic. Residues 58-78 (DLFILNLAVADLCFILCCVPF) traverse the membrane as a helical segment. The Extracellular portion of the chain corresponds to 79–96 (QAAIYTLDAWLFGAFVCK). An intrachain disulfide couples Cys95 to Cys172. The chain crosses the membrane as a helical span at residues 97–118 (TVHLLIYLTMYASSFTLAAVSV). The Cytoplasmic segment spans residues 119–138 (DRYLAVRHPLRSRALRTPRN). A helical transmembrane segment spans residues 139–159 (ARAAVGLVWLLAALFSAPYLS). Topologically, residues 160 to 184 (YYGTVRYGALELCVPAWEDARRRAL) are extracellular. The chain crosses the membrane as a helical span at residues 185-205 (DVATFAAGYLLPVTVVSLAYG). At 206–236 (RTLCFLWAAVGPAGAAAAEARRRATGRAGRA) the chain is on the cytoplasmic side. A helical transmembrane segment spans residues 237 to 257 (MLTVAALYALCWGPHHALILC). The Extracellular segment spans residues 258–259 (FW). The chain crosses the membrane as a helical span at residues 260 to 280 (YGRFAFSPATYACRLASHCLA). The Cytoplasmic segment spans residues 281 to 370 (YANSCLNPLV…RLTLSARGPQ (90 aa)). A lipid anchor (S-palmitoyl cysteine) is attached at Cys308. The disordered stretch occupies residues 328–370 (QPASSGPAGYPGDARPRGWSMEPRGDALRGGETRLTLSARGPQ). The span at 350–359 (PRGDALRGGE) shows a compositional bias: basic and acidic residues.

The protein belongs to the G-protein coupled receptor 1 family.

The protein resides in the cell membrane. Functionally, receptor for the hormone galanin and spexin-1. The protein is Galanin receptor type 3 (Galr3) of Mus musculus (Mouse).